The sequence spans 153 residues: Natriuretic peptides A (153 aa).

Residues 1 to 25 form the signal peptide; it reads MGPFSTITVSFLFCLAFWHPDQIGA. 2 propeptides span residues 26 to 123 and 93 to 103; these read NPVY…TAPR and DGEALGRSTWE. The disordered stretch occupies residues 54–101; the sequence is EDEAVPPQALSEQSDEAGAALSPLPEVPPWTGEVSPAQRDGEALGRST. The residue at position 129 (S129) is a Phosphoserine. Residues C130 and C146 are joined by a disulfide bond. Positions 147-151 are important for degradation of atrial natriuretic peptide by IDE; the sequence is NSFRY.

This sequence belongs to the natriuretic peptide family. In terms of assembly, homodimer; disulfide-linked antiparallel dimer. Post-translationally, the precursor molecule is proteolytically cleaved by CORIN at Arg-123 to produce the atrial natriuretic peptide. Undergoes further proteolytic cleavage by unknown proteases to give rise to long-acting natriuretic peptide, vessel dilator and kaliuretic peptide. Additional processing gives rise to the auriculin and atriopeptin peptides. In the kidneys, alternative processing by an unknown protease results in the peptide urodilatin. In terms of processing, cleavage by MME initiates degradation of the factor and thereby regulates its activity. Degradation by IDE results in reduced activation of NPR1 (in vitro). During IDE degradation, the resulting products can temporarily stimulate NPR2 to produce cGMP, before the fragments are completely degraded and inactivated by IDE (in vitro). Degraded by IDE. Post-translationally, phosphorylation on Ser-129 decreases vasorelaxant activity.

It is found in the secreted. Its subcellular location is the perikaryon. The protein localises to the cell projection. Its function is as follows. Hormone that plays a key role in mediating cardio-renal homeostasis, and is involved in vascular remodeling and regulating energy metabolism. Acts by specifically binding and stimulating NPR1 to produce cGMP, which in turn activates effector proteins, such as PRKG1, that drive various biological responses. Regulates vasodilation, natriuresis, diuresis and aldosterone synthesis and is therefore essential for regulating blood pressure, controlling the extracellular fluid volume and maintaining the fluid-electrolyte balance. Also involved in inhibiting cardiac remodeling and cardiac hypertrophy by inducing cardiomyocyte apoptosis and attenuating the growth of cardiomyocytes and fibroblasts. Plays a role in female pregnancy by promoting trophoblast invasion and spiral artery remodeling in uterus, and thus prevents pregnancy-induced hypertension. In adipose tissue, acts in various cGMP- and PKG-dependent pathways to regulate lipid metabolism and energy homeostasis. This includes up-regulating lipid metabolism and mitochondrial oxygen utilization by activating the AMP-activated protein kinase (AMPK), and increasing energy expenditure by acting via MAPK11 to promote the UCP1-dependent thermogenesis of brown adipose tissue. Binds the clearance receptor NPR3 which removes the hormone from circulation. May have a role in cardio-renal homeostasis through regulation of natriuresis, diuresis, vasodilation, and inhibiting aldosterone synthesis. In vitro, promotes the production of cGMP and induces vasodilation. May promote natriuresis, at least in part, by enhancing prostaglandin E2 synthesis resulting in the inhibition of renal Na+-K+-ATPase. However reports on the involvement of this peptide in mammal blood volume and blood pressure homeostasis are conflicting; according to a report, in vivo it is not sufficient to activate cGMP and does not inhibit collecting duct transport nor effect diuresis and natriuresis. Appears to bind to specific receptors that are distinct from the receptors bound by atrial natriuretic peptide and vessel dilator. Possibly enhances protein excretion in urine by decreasing proximal tubular protein reabsorption. In terms of biological role, may have a role in cardio-renal homeostasis through regulation of natriuresis, diuresis, and vasodilation. In vitro, promotes the production of cGMP and induces vasodilation. May promote natriuresis, at least in part, by enhancing prostaglandin E2 synthesis resulting in the inhibition of renal Na+-K+-ATPase. However reports on the involvement of this peptide in mammal blood volume and blood pressure homeostasis are conflicting; according to a report it is not sufficient to activate cGMP and does not inhibit collecting duct transport nor effect diuresis and natriuresis. Appears to bind to specific receptors that are distinct from the receptors bound by the atrial natriuretic and long-acting natriuretic peptides. Possibly functions in protein excretion in urine by maintaining the integrity of the proximal tubules and enhancing protein excretion by decreasing proximal tubular protein reabsorption. Functionally, may have a role in cardio-renal homeostasis through regulation of diuresis and inhibiting aldosterone synthesis. In vitro, promotes the production of cGMP and induces vasodilation. May promote natriuresis, at least in part, by enhancing prostaglandin E2 synthesis resulting in the inhibition of renal Na+-K+-ATPase. May have a role in potassium excretion but not sodium excretion (natriuresis). Possibly enhances protein excretion in urine by decreasing proximal tubular protein reabsorption. Its function is as follows. Hormone produced in the kidneys that appears to be important for maintaining cardio-renal homeostasis. Mediates vasodilation, natriuresis and diuresis primarily in the renal system, in order to maintain the extracellular fluid volume and control the fluid-electrolyte balance. Specifically binds and stimulates cGMP production by renal transmembrane receptors, likely NPR1. Urodilatin not ANP, may be the natriuretic peptide responsible for the regulation of sodium and water homeostasis in the kidney. May have a role in cardio-renal homeostasis through regulation of natriuresis and vasodilation. In vivo promotes natriuresis and in vitro, vasodilates renal artery strips. In terms of biological role, may have a role in cardio-renal homeostasis through regulation of regulation of natriuresis and vasodilation. In vivo promotes natriuresis. In vitro, vasodilates intestinal smooth muscle but not smooth muscle strips. Functionally, may have a role in cardio-renal homeostasis through regulation of natriuresis and vasodilation. In vivo promotes natriuresis. In vitro, selectively vasodilates intestinal and vascular smooth muscle strips. Its function is as follows. May have a role in cardio-renal homeostasis through regulation of natriuresis and vasodilation. In vivo promotes natriuresis. In vitro, selectively vasodilates intestinal smooth muscle but not vascular smooth muscle strips. In Oryctolagus cuniculus (Rabbit), this protein is Natriuretic peptides A (NPPA).